The following is a 487-amino-acid chain: Probable glycine dehydrogenase (decarboxylating) subunit 2 (487 aa).

Lys273 is subject to N6-(pyridoxal phosphate)lysine.

The protein belongs to the GcvP family. C-terminal subunit subfamily. The glycine cleavage system is composed of four proteins: P, T, L and H. In this organism, the P 'protein' is a heterodimer of two subunits. The cofactor is pyridoxal 5'-phosphate.

The enzyme catalyses N(6)-[(R)-lipoyl]-L-lysyl-[glycine-cleavage complex H protein] + glycine + H(+) = N(6)-[(R)-S(8)-aminomethyldihydrolipoyl]-L-lysyl-[glycine-cleavage complex H protein] + CO2. In terms of biological role, the glycine cleavage system catalyzes the degradation of glycine. The P protein binds the alpha-amino group of glycine through its pyridoxal phosphate cofactor; CO(2) is released and the remaining methylamine moiety is then transferred to the lipoamide cofactor of the H protein. This chain is Probable glycine dehydrogenase (decarboxylating) subunit 2, found in Lysinibacillus sphaericus (strain C3-41).